The chain runs to 130 residues: Gloverin (130 aa).

As to expression, hemolymph.

The protein localises to the secreted. Functionally, antibacterial protein active against Gram-negative bacteria. The sequence is that of Gloverin from Hyalophora cecropia (Cecropia moth).